We begin with the raw amino-acid sequence, 85 residues long: Electron transfer flavoprotein regulatory factor 1 homolog (85 aa).

It belongs to the complex I LYR family. As to expression, highly expressed in the larval fat body.

The protein localises to the mitochondrion. Functionally, acts as a regulator of the electron transfer flavoprotein by promoting the removal of flavin from the ETF holoenzyme. May act with the ETF complex to coordinate lipid homeostasis in the fat body in response to stage-specific demands. The protein is Electron transfer flavoprotein regulatory factor 1 homolog of Drosophila melanogaster (Fruit fly).